A 599-amino-acid polypeptide reads, in one-letter code: Elongation factor 4 (599 aa).

Positions 5-187 constitute a tr-type G domain; that stretch reads NHIRNFSIIA…QIVQLVPPPE (183 aa). Residues 17-22 and 134-137 contribute to the GTP site; these read DHGKST and NKMD.

Belongs to the TRAFAC class translation factor GTPase superfamily. Classic translation factor GTPase family. LepA subfamily.

The protein localises to the cell inner membrane. It carries out the reaction GTP + H2O = GDP + phosphate + H(+). In terms of biological role, required for accurate and efficient protein synthesis under certain stress conditions. May act as a fidelity factor of the translation reaction, by catalyzing a one-codon backward translocation of tRNAs on improperly translocated ribosomes. Back-translocation proceeds from a post-translocation (POST) complex to a pre-translocation (PRE) complex, thus giving elongation factor G a second chance to translocate the tRNAs correctly. Binds to ribosomes in a GTP-dependent manner. In Hahella chejuensis (strain KCTC 2396), this protein is Elongation factor 4.